The chain runs to 149 residues: Large ribosomal subunit protein eL19 (149 aa).

Residues 45-94 form a disordered region; sequence VADGTIDAEDTQGNSRGRARERDAKESYGHKKGAGSRKGKAGARQNEKRE. The segment covering 62–73 has biased composition (basic and acidic residues); sequence RARERDAKESYG. The segment covering 74-85 has biased composition (basic residues); that stretch reads HKKGAGSRKGKA.

It belongs to the eukaryotic ribosomal protein eL19 family. Part of the 50S ribosomal subunit.

In terms of biological role, binds to the 23S rRNA. In Halobacterium salinarum (strain ATCC 700922 / JCM 11081 / NRC-1) (Halobacterium halobium), this protein is Large ribosomal subunit protein eL19.